A 496-amino-acid polypeptide reads, in one-letter code: Acyltransferase clz6 (496 aa).

His-163 functions as the Proton acceptor in the catalytic mechanism.

This sequence belongs to the plant acyltransferase family. Monomer.

The protein operates within secondary metabolite biosynthesis. Acyltransferase; part of the gene cluster that mediates the biosynthesis of squalestatin S1 (SQS1, also known as zaragozic acid A), a heavily oxidized fungal polyketide that offers potent cholesterol lowering activity by targeting squalene synthase (SS). SQS1 is composed of a 2,8-dioxobicyclic[3.2.1]octane-3,4,5-tricarboxyclic acid core that is connected to two lipophilic polyketide arms. These initial steps feature the priming of an unusual benzoic acid starter unit onto the highly reducing polyketide synthase clz14, followed by oxaloacetate extension and product release to generate a tricarboxylic acid containing product. The phenylalanine ammonia lyase (PAL) clz10 and the acyl-CoA ligase clz12 are involved in transforming phenylalanine into benzoyl-CoA. The citrate synthase-like protein clz17 is involved in connecting the C-alpha-carbons of the hexaketide chain and oxaloacetate to afford the tricarboxylic acid unit. The potential hydrolytic enzymes, clz11 and clz13, are in close proximity to pks2 and may participate in product release. On the other side, the tetraketide arm is synthesized by a the squalestatin tetraketide synthase clz2 and enzymatically esterified to the core in the last biosynthetic step, by the acetyltransferase clz6. The biosynthesis of the tetraketide must involve 3 rounds of chain extension. After the first and second rounds methyl-transfer occurs, and in all rounds of extension the ketoreductase and dehydratase are active. The enoyl reductase and C-MeT of clz2 are not active in the final round of extension. The acetyltransferase clz6 appears to have a broad substrate selectivity for its acyl CoA substrate, allowing the in vitro synthesis of novel squalestatins. The biosynthesis of SQS1 requires several oxidative steps likely performed by oxidoreductases clz3, clz15 and clz16. Finally, in support of the identification of the cluster as being responsible for SQS1 production, the cluster contains a gene encoding a putative squalene synthase (SS) clz20, suggesting a likely mechanism for self-resistance. The polypeptide is Acyltransferase clz6 (Cochliobolus lunatus (Filamentous fungus)).